The following is an 89-amino-acid chain: Large ribosomal subunit protein bL27 (89 aa).

Residues 1–21 (MAHKKAGGSSRNGRDSAGRRL) are disordered.

Belongs to the bacterial ribosomal protein bL27 family.

This chain is Large ribosomal subunit protein bL27, found in Roseobacter denitrificans (strain ATCC 33942 / OCh 114) (Erythrobacter sp. (strain OCh 114)).